The chain runs to 378 residues: uncharacterized protein (378 aa).

Zn(2+)-binding residues include C38, H60, C90, C93, C96, and C104.

This sequence belongs to the zinc-containing alcohol dehydrogenase family. Class-III subfamily. Zn(2+) serves as cofactor.

This is an uncharacterized protein from Bacillus subtilis (strain 168).